The sequence spans 397 residues: MFHRIEEALEDLKKGKVVIVCDDENRENEGDFIALAEYITPETINFMITHGRGLVCVPITEGYAERLQLEPMVSHNTDSHHTAFTVSIDHVSTTTGISAHERATTIQELLNPASKGADFNRPGHIFPLIAKEGGVLRRAGHTEAAVDLAKLCGAEPAGVICEIINEDGTMARVPDLIECAKQFDIKMITIEDLIAYRRHHETLVTREAEITLPTDFGTFHAIGYSNSLDTKEHIALVKGDISTGEPVLVRVHSECLTGDVFGSHRCDCGPQLHAALAQIEREGKGVLLYMRQEGRGIGLLNKLRAYKLQEEGFDTVEANEKLGFPADLRDYGIGAQILKDLGLQSLRLLTNNPRKIAGLQGYDLEVVERVPLQMPAKEENKSYLQTKVNKLGHLLNL.

The DHBP synthase stretch occupies residues 1-199; it reads MFHRIEEALE…IEDLIAYRRH (199 aa). D-ribulose 5-phosphate contacts are provided by residues 26 to 27, Asp31, 138 to 142, and Glu162; these read RE and RAGHT. Glu27 lines the Mg(2+) pocket. A Mg(2+)-binding site is contributed by His141. Residues 200–397 form a GTP cyclohydrolase II region; the sequence is HETLVTREAE…VNKLGHLLNL (198 aa). 250–254 serves as a coordination point for GTP; the sequence is RVHSE. Residues Cys255, Cys266, and Cys268 each contribute to the Zn(2+) site. GTP contacts are provided by residues Gln271, 293 to 295, and Thr315; that span reads EGR. Residue Asp327 is the Proton acceptor; for GTP cyclohydrolase activity of the active site. The active-site Nucleophile; for GTP cyclohydrolase activity is Arg329. The GTP site is built by Thr350 and Lys355.

It in the N-terminal section; belongs to the DHBP synthase family. This sequence in the C-terminal section; belongs to the GTP cyclohydrolase II family. The cofactor is Mg(2+). It depends on Mn(2+) as a cofactor. Zn(2+) is required as a cofactor.

It carries out the reaction D-ribulose 5-phosphate = (2S)-2-hydroxy-3-oxobutyl phosphate + formate + H(+). The enzyme catalyses GTP + 4 H2O = 2,5-diamino-6-hydroxy-4-(5-phosphoribosylamino)-pyrimidine + formate + 2 phosphate + 3 H(+). The protein operates within cofactor biosynthesis; riboflavin biosynthesis; 2-hydroxy-3-oxobutyl phosphate from D-ribulose 5-phosphate: step 1/1. Its pathway is cofactor biosynthesis; riboflavin biosynthesis; 5-amino-6-(D-ribitylamino)uracil from GTP: step 1/4. In terms of biological role, catalyzes the conversion of D-ribulose 5-phosphate to formate and 3,4-dihydroxy-2-butanone 4-phosphate. Its function is as follows. Catalyzes the conversion of GTP to 2,5-diamino-6-ribosylamino-4(3H)-pyrimidinone 5'-phosphate (DARP), formate and pyrophosphate. The polypeptide is Riboflavin biosynthesis protein RibBA (Bacillus cereus (strain ATCC 14579 / DSM 31 / CCUG 7414 / JCM 2152 / NBRC 15305 / NCIMB 9373 / NCTC 2599 / NRRL B-3711)).